Here is a 102-residue protein sequence, read N- to C-terminus: RNA-binding protein Hfq (102 aa).

Residues 9–68 (DPFLNALRRERVPVSIYLVNGIKLQGQIESFDQFVILLKNTVSQMVYKHAISTVVPSRPV) form the Sm domain. The segment at 63–102 (VPSRPVSHHSNNAGGGTSSNYHHGSSAQGTSAQQDSEETE) is disordered. A compositionally biased stretch (polar residues) spans 70-96 (HHSNNAGGGTSSNYHHGSSAQGTSAQQ).

The protein belongs to the Hfq family. As to quaternary structure, homohexamer.

Functionally, RNA chaperone that binds small regulatory RNA (sRNAs) and mRNAs to facilitate mRNA translational regulation in response to envelope stress, environmental stress and changes in metabolite concentrations. Also binds with high specificity to tRNAs. This is RNA-binding protein Hfq from Citrobacter koseri (strain ATCC BAA-895 / CDC 4225-83 / SGSC4696).